We begin with the raw amino-acid sequence, 271 residues long: ATP synthase subunit a (271 aa).

Helical transmembrane passes span 40–60 (TINIDSMFFSVVLGLLFLVLF), 100–120 (LIAPLALTIFVWVFLMNLMDL), 146–166 (DVNVTLSMALGVFILILFYSI), 220–240 (LIFILIAGLLPWWSQWILNVP), and 242–262 (AIFHILIITLQAFIFMVLTIV).

Belongs to the ATPase A chain family. As to quaternary structure, F-type ATPases have 2 components, CF(1) - the catalytic core - and CF(0) - the membrane proton channel. CF(1) has five subunits: alpha(3), beta(3), gamma(1), delta(1), epsilon(1). CF(0) has three main subunits: a(1), b(2) and c(9-12). The alpha and beta chains form an alternating ring which encloses part of the gamma chain. CF(1) is attached to CF(0) by a central stalk formed by the gamma and epsilon chains, while a peripheral stalk is formed by the delta and b chains.

The protein resides in the cell inner membrane. Key component of the proton channel; it plays a direct role in the translocation of protons across the membrane. In Escherichia coli O8 (strain IAI1), this protein is ATP synthase subunit a.